Reading from the N-terminus, the 130-residue chain is Gonadotropin subunit beta-1 (130 aa).

The N-terminal stretch at 1 to 18 is a signal peptide; that stretch reads MRMHFVVMVMLLPALMMA. 5 cysteine pairs are disulfide-bonded: Cys26–Cys74, Cys40–Cys89, Cys51–Cys105, Cys55–Cys107, and Cys110–Cys117. N-linked (GlcNAc...) asparagine glycosylation is present at Asn30.

The protein belongs to the glycoprotein hormones subunit beta family. In terms of assembly, heterodimer of an alpha and a beta chain.

It is found in the secreted. Involved in gametogenesis and steroidogenesis. The sequence is that of Gonadotropin subunit beta-1 (cgba) from Cyprinus carpio (Common carp).